A 323-amino-acid polypeptide reads, in one-letter code: Aquaporin-4 (323 aa).

The Cytoplasmic portion of the chain corresponds to 1–36; it reads MSDRPTARRWGKCGPLCTRENIMVAFKGVWTQAFWK. S-palmitoyl cysteine attachment occurs at residues Cys13 and Cys17. The chain crosses the membrane as a helical span at residues 37-57; the sequence is AVTAEFLAMLIFVLLSLGSTI. Over 58–69 the chain is Extracellular; sequence NWGGTEKPLPVD. Residues 70-89 form a helical membrane-spanning segment; the sequence is MVLISLCFGLSIATMVQCFG. Topologically, residues 90–93 are cytoplasmic; it reads HISG. Residues 94-101 constitute an intramembrane region (discontinuously helical); the sequence is GHINPAVT. The NPA 1 motif lies at 97–99; sequence NPA. The Cytoplasmic portion of the chain corresponds to 102–115; that stretch reads VAMVCTRKISIAKS. Ser111 carries the phosphoserine; by PKG modification. Residues 116–136 form a helical membrane-spanning segment; it reads VFYIAAQCLGAIIGAGILYLV. The Extracellular portion of the chain corresponds to 137-155; the sequence is TPPSVVGGLGVTMVHGNLT. Asn153 is a glycosylation site (N-linked (GlcNAc...) asparagine). Residues 156-176 traverse the membrane as a helical segment; it reads AGHGLLVELIITFQLVFTIFA. Residues 177-184 lie on the Cytoplasmic side of the membrane; it reads SCDSKRTD. Position 180 is a phosphoserine; by PKC (Ser180). A helical membrane pass occupies residues 185-205; the sequence is VTGSIALAIGFSVAIGHLFAI. An N-linked (GlcNAc...) asparagine glycan is attached at Asn206. Residues 206-208 lie on the Extracellular side of the membrane; sequence NYT. Residues 209 to 222 constitute an intramembrane region (discontinuously helical); sequence GASMNPARSFGPAV. The short motif at 213-215 is the NPA 2 element; sequence NPA. The Extracellular portion of the chain corresponds to 223–231; sequence IMGNWENHW. A helical membrane pass occupies residues 232-252; that stretch reads IYWVGPIIGAVLAGGLYEYVF. Residues 253–323 are Cytoplasmic-facing; the sequence is CPDVEFKRRF…DQSGEVLSSV (71 aa). Ser276 and Ser285 each carry phosphoserine. Phosphothreonine is present on Thr289. Ser321 is modified (phosphoserine).

Belongs to the MIP/aquaporin (TC 1.A.8) family. Homotetramer. The tetramers can form oligomeric arrays in membranes. The size of the oligomers differs between tissues and is smaller in skeletal muscle than in brain. Interaction between AQP4 oligomeric arrays in close-by cells can contribute to cell-cell adhesion. Part of a complex containing MLC1, TRPV4, HEPACAM and ATP1B1. In terms of processing, phosphorylation by PKC at Ser-180 reduces conductance by 50%. Phosphorylation by PKG at Ser-111 in response to glutamate increases conductance by 40%. Isoform 2: Palmitoylated on its N-terminal region. Isoform 1: Not palmitoylated. Detected in skeletal muscle. Detected in stomach, along the glandular base region of the fundic gland (at protein level). Detected in brain, lung and skeletal muscle, and at much lower levels in heart and ovary.

Its subcellular location is the cell membrane. The protein resides in the basolateral cell membrane. It localises to the endosome membrane. It is found in the sarcolemma. The protein localises to the cell projection. It carries out the reaction H2O(in) = H2O(out). In terms of biological role, forms a water-specific channel. Plays an important role in brain water homeostasis. It is involved in glymphatic solute transport and is required for a normal rate of water exchange across the blood brain interface. Required for normal levels of cerebrospinal fluid influx into the brain cortex and parenchyma along paravascular spaces that surround penetrating arteries, and for normal drainage of interstitial fluid along paravenous drainage pathways. Thereby, it is required for normal clearance of solutes from the brain interstitial fluid, including soluble beta-amyloid peptides derived from APP. Plays a redundant role in urinary water homeostasis and urinary concentrating ability. This is Aquaporin-4 (AQP4) from Homo sapiens (Human).